Consider the following 150-residue polypeptide: MFEVLVYMFENYFESDIHPDHETLSKELFAAGFDQEDINGAFDWYSALESMSEESDAQLGTAGIRIYSEAETKRLSADSLSFMMFLEQAKVLTPAQRELVIDRAMALSQPEVGLEETRWIVLMALWNQDKANDYLFVEDAMFNDNRPTLH.

It belongs to the Smg family.

The sequence is that of Protein Smg homolog from Methylobacillus flagellatus (strain ATCC 51484 / DSM 6875 / VKM B-1610 / KT).